The chain runs to 370 residues: Protein RecA (370 aa).

Residues 1–20 form a disordered region; the sequence is MSFEERRKKDSKESSSKEKD. 78 to 85 is an ATP binding site; that stretch reads GPESSGKT.

The protein belongs to the RecA family.

The protein resides in the cytoplasm. In terms of biological role, can catalyze the hydrolysis of ATP in the presence of single-stranded DNA, the ATP-dependent uptake of single-stranded DNA by duplex DNA, and the ATP-dependent hybridization of homologous single-stranded DNAs. It interacts with LexA causing its activation and leading to its autocatalytic cleavage. In Prochlorococcus marinus (strain MIT 9515), this protein is Protein RecA.